The primary structure comprises 252 residues: 3-dehydroquinate dehydratase (252 aa).

3-dehydroquinate contacts are provided by residues S21, 46–48 (EWR), and R82. Residue H143 is the Proton donor/acceptor of the active site. The active-site Schiff-base intermediate with substrate is the K170. Residues R213, S232, and Q236 each contribute to the 3-dehydroquinate site.

It belongs to the type-I 3-dehydroquinase family. As to quaternary structure, homodimer.

It carries out the reaction 3-dehydroquinate = 3-dehydroshikimate + H2O. It functions in the pathway metabolic intermediate biosynthesis; chorismate biosynthesis; chorismate from D-erythrose 4-phosphate and phosphoenolpyruvate: step 3/7. Involved in the third step of the chorismate pathway, which leads to the biosynthesis of aromatic amino acids. Catalyzes the cis-dehydration of 3-dehydroquinate (DHQ) and introduces the first double bond of the aromatic ring to yield 3-dehydroshikimate. This Escherichia coli O7:K1 (strain IAI39 / ExPEC) protein is 3-dehydroquinate dehydratase.